The chain runs to 1396 residues: DNA-directed RNA polymerase subunit beta' (1396 aa).

4 residues coordinate Zn(2+): cysteine 71, cysteine 73, cysteine 86, and cysteine 89. Residues aspartate 462, aspartate 464, and aspartate 466 each contribute to the Mg(2+) site. Positions 810, 884, 891, and 894 each coordinate Zn(2+). The span at 1372–1382 (DEQLAQQREDA) shows a compositional bias: basic and acidic residues. Residues 1372 to 1396 (DEQLAQQREDAMEPLPAEIALSDAE) form a disordered region.

It belongs to the RNA polymerase beta' chain family. As to quaternary structure, the RNAP catalytic core consists of 2 alpha, 1 beta, 1 beta' and 1 omega subunit. When a sigma factor is associated with the core the holoenzyme is formed, which can initiate transcription. It depends on Mg(2+) as a cofactor. Requires Zn(2+) as cofactor.

The enzyme catalyses RNA(n) + a ribonucleoside 5'-triphosphate = RNA(n+1) + diphosphate. DNA-dependent RNA polymerase catalyzes the transcription of DNA into RNA using the four ribonucleoside triphosphates as substrates. The chain is DNA-directed RNA polymerase subunit beta' from Caulobacter vibrioides (strain ATCC 19089 / CIP 103742 / CB 15) (Caulobacter crescentus).